The chain runs to 354 residues: MRVTDFSFELPESLIAHYPQPERSRCRLLSLEGPTGALTHGTFTDLLDKLNPGDLLVFNNTRVIPARLFGRKASGGKIEVLVERMLDDKRILAHIRASKAPKPGTELLLGDDESIHATMTARHGALFEVEFNDPRPVLDILNAIGHMPLPPYIDRPDEDADRELYQTVYSEKPGAVAAPTAGLHFDEPLLAALREKGVEMAFVTLHVGAGTFQPVRVDTIEDHIMHSEYAEVPQEVVDAVLAAKARGNRVIAVGTTSVRSLESAAQAAKSDLIEPFFGDTQIFIYPGYQYKVIDALITNFHLPESTLIMLVSAFAGYQHTMNAYKTAVEQKYRFFSYGDAMFITCNPQAISERP.

The protein belongs to the QueA family. In terms of assembly, monomer.

The protein localises to the cytoplasm. It carries out the reaction 7-aminomethyl-7-carbaguanosine(34) in tRNA + S-adenosyl-L-methionine = epoxyqueuosine(34) in tRNA + adenine + L-methionine + 2 H(+). The protein operates within tRNA modification; tRNA-queuosine biosynthesis. Its function is as follows. Transfers and isomerizes the ribose moiety from AdoMet to the 7-aminomethyl group of 7-deazaguanine (preQ1-tRNA) to give epoxyqueuosine (oQ-tRNA). This is S-adenosylmethionine:tRNA ribosyltransferase-isomerase from Salmonella typhi.